The chain runs to 344 residues: Acireductone dioxygenase (344 aa).

Residues His-92, His-94, Glu-98, and His-137 each contribute to the Fe(2+) site. Residues His-92, His-94, Glu-98, and His-137 each coordinate Ni(2+).

This sequence belongs to the acireductone dioxygenase (ARD) family. Fe(2+) is required as a cofactor. Requires Ni(2+) as cofactor.

It localises to the cytoplasm. The protein resides in the nucleus. The enzyme catalyses 1,2-dihydroxy-5-(methylsulfanyl)pent-1-en-3-one + O2 = 4-methylsulfanyl-2-oxobutanoate + formate + 2 H(+). It catalyses the reaction 1,2-dihydroxy-5-(methylsulfanyl)pent-1-en-3-one + O2 = 3-(methylsulfanyl)propanoate + CO + formate + 2 H(+). The protein operates within amino-acid biosynthesis; L-methionine biosynthesis via salvage pathway; L-methionine from S-methyl-5-thio-alpha-D-ribose 1-phosphate: step 5/6. In terms of biological role, catalyzes 2 different reactions between oxygen and the acireductone 1,2-dihydroxy-3-keto-5-methylthiopentene (DHK-MTPene) depending upon the metal bound in the active site. Fe-containing acireductone dioxygenase (Fe-ARD) produces formate and 2-keto-4-methylthiobutyrate (KMTB), the alpha-ketoacid precursor of methionine in the methionine recycle pathway. Ni-containing acireductone dioxygenase (Ni-ARD) produces methylthiopropionate, carbon monoxide and formate, and does not lie on the methionine recycle pathway. In Leishmania infantum, this protein is Acireductone dioxygenase.